Consider the following 1261-residue polypeptide: Pentatricopeptide repeat-containing protein 5, mitochondrial (1261 aa).

PPR repeat units lie at residues 365–404 (HPDL…TSMT), 405–442 (NVRS…NQVI), 443–479 (PSSI…TYKA), 480–514 (SPST…RFSD), 550–584 (TNFT…KVSL), 806–849 (HPEV…EKAN), 852–886 (MALI…GYIP), 887–924 (RAST…NVKP), 925–959 (SVFL…GLLP), 960–995 (TSVT…NYQP), 996–1031 (RVAP…DIEP), 1032–1068 (SSHT…DVPI), 1109–1143 (DANL…NVSL), 1144–1179 (NAYI…MSGK), and 1180–1214 (EPST…RYPL). Residues 1225–1261 (NSHMGQKPKRRSLNTSHSSLASLGNASTQHSINSSIN) form a disordered region. Residues 1237-1261 (LNTSHSSLASLGNASTQHSINSSIN) show a composition bias toward polar residues.

Its subcellular location is the mitochondrion. In terms of biological role, mitochondrial RNA-binding protein that acts as a general negative regulator of mitochondrial translation. This chain is Pentatricopeptide repeat-containing protein 5, mitochondrial (ppr5), found in Schizosaccharomyces pombe (strain 972 / ATCC 24843) (Fission yeast).